Here is a 650-residue protein sequence, read N- to C-terminus: Acetyl-coenzyme A synthetase (650 aa).

Residues 191 to 194, threonine 311, and asparagine 335 contribute to the CoA site; that span reads RAGR. ATP contacts are provided by residues 387 to 389, 411 to 416, aspartate 500, and arginine 515; these read GEP and DTWWQT. Serine 523 provides a ligand contact to CoA. Arginine 526 contributes to the ATP binding site. Mg(2+)-binding residues include valine 537, histidine 539, and valine 542. CoA is bound at residue arginine 584. Lysine 609 is modified (N6-acetyllysine).

Belongs to the ATP-dependent AMP-binding enzyme family. It depends on Mg(2+) as a cofactor. Post-translationally, acetylated. Deacetylation by the SIR2-homolog deacetylase activates the enzyme.

It carries out the reaction acetate + ATP + CoA = acetyl-CoA + AMP + diphosphate. In terms of biological role, catalyzes the conversion of acetate into acetyl-CoA (AcCoA), an essential intermediate at the junction of anabolic and catabolic pathways. AcsA undergoes a two-step reaction. In the first half reaction, AcsA combines acetate with ATP to form acetyl-adenylate (AcAMP) intermediate. In the second half reaction, it can then transfer the acetyl group from AcAMP to the sulfhydryl group of CoA, forming the product AcCoA. The sequence is that of Acetyl-coenzyme A synthetase from Shewanella halifaxensis (strain HAW-EB4).